The following is a 418-amino-acid chain: Delta(14)-sterol reductase TM7SF2 (418 aa).

The next 6 membrane-spanning stretches (helical) occupy residues 13 to 35 (FGGPLGAAALLLLLPATMFHLLL), 62 to 81 (ALLLWLAWLGLQAALYLLPA), 102 to 124 (GFQALVLTALLVGLGMSAGLPLG), 129 to 148 (MLLPLAFVATLTAFIFSLFL), 255 to 277 (FGFMLAFGDMAWVPFTYSLQAQF), and 287 to 304 (LPMASVICLINATGYYIF). NADP(+)-binding positions include K311, R315, L338, W343, and 350 to 351 (NY). A helical transmembrane segment spans residues 355–377 (LIMALAWSLPCGVSHLLPYFYLL). NADP(+) contacts are provided by residues D390, 394–398 (CLQKY), and Y405.

It belongs to the ERG4/ERG24 family. Expressed in adult heart, brain, pancreas, lung, liver, skeletal muscle, kidney, ovary, prostate, testis and adrenal gland, but not detected in placenta, spleen, thymus, small intestine, colon (mucosal lining), or peripheral blood leukocytes.

The protein resides in the microsome membrane. The protein localises to the endoplasmic reticulum membrane. The enzyme catalyses 4,4-dimethyl-5alpha-cholesta-8,24-dien-3beta-ol + NADP(+) = 4,4-dimethyl-5alpha-cholesta-8,14,24-trien-3beta-ol + NADPH + H(+). It catalyses the reaction 5alpha-cholest-8,14-dien-3beta-ol + NADPH + H(+) = 5alpha-cholest-8-en-3beta-ol + NADP(+). The catalysed reaction is 4,4-dimethyl-8,14-cholestadien-3beta-ol + NADPH + H(+) = 4,4-dimethyl-5alpha-cholest-8-en-3beta-ol + NADP(+). It functions in the pathway steroid biosynthesis; cholesterol biosynthesis. Functionally, catalyzes the reduction of the C14-unsaturated bond of lanosterol, as part of the metabolic pathway leading to cholesterol biosynthesis. The polypeptide is Delta(14)-sterol reductase TM7SF2 (TM7SF2) (Homo sapiens (Human)).